The following is a 420-amino-acid chain: Glucose-1-phosphate adenylyltransferase (420 aa).

Alpha-D-glucose 1-phosphate-binding positions include Tyr107, Gly172, Glu187 to Lys188, and Ser205.

This sequence belongs to the bacterial/plant glucose-1-phosphate adenylyltransferase family. Homotetramer.

The enzyme catalyses alpha-D-glucose 1-phosphate + ATP + H(+) = ADP-alpha-D-glucose + diphosphate. Its pathway is glycan biosynthesis; glycogen biosynthesis. In terms of biological role, involved in the biosynthesis of ADP-glucose, a building block required for the elongation reactions to produce glycogen. Catalyzes the reaction between ATP and alpha-D-glucose 1-phosphate (G1P) to produce pyrophosphate and ADP-Glc. The polypeptide is Glucose-1-phosphate adenylyltransferase (Rhizobium johnstonii (strain DSM 114642 / LMG 32736 / 3841) (Rhizobium leguminosarum bv. viciae)).